The primary structure comprises 618 residues: MNRQQLEGRIDIAPRTPGVYLMKDAAGKILYVGKAKNLKSRTRAYFSGTDSRAMIPFLVSRIHDIEFILTETEKEALILENNLIKEHHPRYNICFRDDKAYFNIRADLNEPFPRFQLVRRPRKDGAKYFGPYPSSASARETLQFLQSIFPLRTCRDAELKSRTRPCLEYQIKRCLAPCVGRINSEDYLQMVRDGVSFLEGRGNNLLRELRERMKMAAEQMNYEEAAFLRDRIRAIEETLERQRMVSMTFKDQDIFGLYREGHLIQVCILLIRQGKILGSRLLPLLKFEGETADMLSSLLMQYYDQSVDIPQEILIPASIEDRQVIREWLEEKRGKGLSILIPRKGRGLELLHIAEQNAEHGFKMERKSLDDSDESLRLLMERLHLRRFPRKIEAFDISNIGGRLAVAAMVTFQDGRPLKSGYRRFRIRTVHGADDYAMMYEALKRRYQGKENLPDLIVVDGGKGQLAVAFSLLKDLSISGQDVIGLAKERVNGVTVQGGVNKSEDRVYLPHKKEALYLSRWPAVLFLLQRIRDEAHRFAVSYHRSLKTRSDFMSLLDDIPGVGEVRKKALLLSFGDLARIREATVEELTQVEGIGKDLGEKIHAFLHNDQRSVEPSTG.

In terms of domain architecture, GIY-YIG spans 15–93 (RTPGVYLMKD…IKEHHPRYNI (79 aa)). The 36-residue stretch at 203–238 (NNLLRELRERMKMAAEQMNYEEAAFLRDRIRAIEET) folds into the UVR domain.

This sequence belongs to the UvrC family. In terms of assembly, interacts with UvrB in an incision complex.

Its subcellular location is the cytoplasm. The UvrABC repair system catalyzes the recognition and processing of DNA lesions. UvrC both incises the 5' and 3' sides of the lesion. The N-terminal half is responsible for the 3' incision and the C-terminal half is responsible for the 5' incision. This chain is UvrABC system protein C, found in Syntrophus aciditrophicus (strain SB).